The chain runs to 864 residues: Leucine--tRNA ligase (864 aa).

The 'HIGH' region signature appears at 42–52 (PYPSGKLHMGH). Positions 624–628 (KMSKS) match the 'KMSKS' region motif. Position 627 (lysine 627) interacts with ATP.

This sequence belongs to the class-I aminoacyl-tRNA synthetase family.

The protein resides in the cytoplasm. It catalyses the reaction tRNA(Leu) + L-leucine + ATP = L-leucyl-tRNA(Leu) + AMP + diphosphate. The sequence is that of Leucine--tRNA ligase from Paraburkholderia phymatum (strain DSM 17167 / CIP 108236 / LMG 21445 / STM815) (Burkholderia phymatum).